The chain runs to 136 residues: Holo-[acyl-carrier-protein] synthase (136 aa).

The Mg(2+) site is built by Asp8 and Glu57.

It belongs to the P-Pant transferase superfamily. AcpS family. It depends on Mg(2+) as a cofactor.

The protein localises to the cytoplasm. It carries out the reaction apo-[ACP] + CoA = holo-[ACP] + adenosine 3',5'-bisphosphate + H(+). Its function is as follows. Transfers the 4'-phosphopantetheine moiety from coenzyme A to a Ser of acyl-carrier-protein. This is Holo-[acyl-carrier-protein] synthase from Azorhizobium caulinodans (strain ATCC 43989 / DSM 5975 / JCM 20966 / LMG 6465 / NBRC 14845 / NCIMB 13405 / ORS 571).